An 862-amino-acid polypeptide reads, in one-letter code: Protein translocase subunit SecA (862 aa).

ATP is bound by residues Gln-88, 106-110, and Asp-506; that span reads GEGKT. Zn(2+) is bound by residues Cys-839, Cys-841, Cys-850, and His-851.

Belongs to the SecA family. Monomer and homodimer. Part of the essential Sec protein translocation apparatus which comprises SecA, SecYEG and auxiliary proteins SecDF-YajC and YidC. Zn(2+) is required as a cofactor.

Its subcellular location is the cell inner membrane. It is found in the cytoplasm. The enzyme catalyses ATP + H2O + cellular proteinSide 1 = ADP + phosphate + cellular proteinSide 2.. Part of the Sec protein translocase complex. Interacts with the SecYEG preprotein conducting channel. Has a central role in coupling the hydrolysis of ATP to the transfer of proteins into and across the cell membrane, serving as an ATP-driven molecular motor driving the stepwise translocation of polypeptide chains across the membrane. The chain is Protein translocase subunit SecA from Campylobacter jejuni subsp. doylei (strain ATCC BAA-1458 / RM4099 / 269.97).